A 760-amino-acid polypeptide reads, in one-letter code: Metal transporter cnnm-2 (760 aa).

An N-terminal signal peptide occupies residues 1–21 (MIIKVFLRLLLLCAHIVCIDG). Topologically, residues 22 to 153 (KLEIRPVVSG…ETFMPVWAQC (132 aa)) are extracellular. Asparagine 88 carries an N-linked (GlcNAc...) asparagine glycan. In terms of domain architecture, CNNM transmembrane spans 145 to 323 (TFMPVWAQCA…MENDACDIDL (179 aa)). Residues 154–174 (AILCLLFSISALCSGLTLGLM) form a helical membrane-spanning segment. Topologically, residues 175–208 (ALTPQELSILMKSGSQREKKHAAAIYPIRCHGNR) are cytoplasmic. Residues 209–229 (LLCTVIIMNVIVNTGITLLFD) traverse the membrane as a helical segment. Position 230 (aspartate 230) is a topological domain, extracellular. A helical transmembrane segment spans residues 231 to 251 (LAEGLIAFVASTVGIVVFGEI). At 252 to 261 (LPQSICVKYG) the chain is on the cytoplasmic side. The chain crosses the membrane as a helical span at residues 262-282 (LAVGANTIFITKFFMFLLFPI). At 283-760 (TWPLGKILDK…SVEELKPLME (478 aa)) the chain is on the extracellular side. N-linked (GlcNAc...) asparagine glycosylation is found at asparagine 302 and asparagine 403. CBS domains follow at residues 344-406 (MTDI…NITV) and 442-512 (MVAK…ITDE). N-linked (GlcNAc...) asparagine glycans are attached at residues asparagine 528, asparagine 592, and asparagine 667. The disordered stretch occupies residues 708-734 (DDFGSPTRKASILDSSPNSRKRSSTSV).

Belongs to the ACDP family.

The protein resides in the cell membrane. Functionally, probable metal transporter. Probably acts redundantly with the other metal transport proteins cnnm-1, cnnm-3, cnnm-4 and cnnm-5 to regulate Mg(2+) homeostasis. The protein is Metal transporter cnnm-2 of Caenorhabditis elegans.